Consider the following 476-residue polypeptide: Cysteine--tRNA ligase (476 aa).

Cys-29 contacts Zn(2+). Residues 31-41 (PTVYDYPHLGH) carry the 'HIGH' region motif. Residues Cys-209, His-234, and Glu-238 each coordinate Zn(2+). The 'KMSKS' region motif lies at 266 to 270 (KMSKS). Lys-269 contacts ATP.

Belongs to the class-I aminoacyl-tRNA synthetase family. Zn(2+) is required as a cofactor.

It is found in the cytoplasm. The enzyme catalyses tRNA(Cys) + L-cysteine + ATP = L-cysteinyl-tRNA(Cys) + AMP + diphosphate. This Thermococcus gammatolerans (strain DSM 15229 / JCM 11827 / EJ3) protein is Cysteine--tRNA ligase.